The chain runs to 230 residues: TorCAD operon transcriptional regulatory protein TorR (230 aa).

The region spanning 4 to 117 (HIVIVEDEPV…ELVVRVKNLL (114 aa)) is the Response regulatory domain. Asp-53 carries the post-translational modification 4-aspartylphosphate. Residues 132-227 (DNCYRFAGYC…QHGEGYFLAA (96 aa)) constitute a DNA-binding region (ompR/PhoB-type).

Interacts with TorI. TorI binds to the effector domain of TorR. This interaction, which does not interfere with TorR DNA binding activity, probably prevents the recruitment of RNA polymerase to the torCAD promoter. In terms of processing, phosphorylated and dephosphorylated by TorS.

It is found in the cytoplasm. In terms of biological role, member of the two-component regulatory system TorS/TorR involved in the anaerobic utilization of trimethylamine-N-oxide (TMAO). Phosphorylated TorR activates the transcription of the torCAD operon by binding to four decameric boxes located in the torCAD promoter. Box1, 2 and 4 contain the DNA sequence 5'-CTGTTCATAT-3' and box3 contains the DNA sequence 5'-CCGTTCATCC-3'. Phosphorylated as well as unphosphorylated TorR negatively regulates its own expression by binding to box1 and 2. The polypeptide is TorCAD operon transcriptional regulatory protein TorR (torR) (Escherichia coli (strain K12)).